The chain runs to 1161 residues: DNA-directed RNA polymerase subunit beta (1161 aa).

It belongs to the RNA polymerase beta chain family. In terms of assembly, the RNAP catalytic core consists of 2 alpha, 1 beta, 1 beta' and 1 omega subunit. When a sigma factor is associated with the core the holoenzyme is formed, which can initiate transcription. The RNAP complex including the principal sigma factor HrdB also interacts with RNA-binding protein RbpA.

The enzyme catalyses RNA(n) + a ribonucleoside 5'-triphosphate = RNA(n+1) + diphosphate. DNA-dependent RNA polymerase catalyzes the transcription of DNA into RNA using the four ribonucleoside triphosphates as substrates. In Streptomyces coelicolor (strain ATCC BAA-471 / A3(2) / M145), this protein is DNA-directed RNA polymerase subunit beta.